We begin with the raw amino-acid sequence, 497 residues long: Glycerol kinase (497 aa).

Position 12 (Thr-12) interacts with ADP. ATP is bound by residues Thr-12, Thr-13, and Ser-14. Sn-glycerol 3-phosphate is bound at residue Thr-12. An ADP-binding site is contributed by Arg-16. Sn-glycerol 3-phosphate is bound by residues Arg-82, Glu-83, Tyr-134, and Asp-243. Arg-82, Glu-83, Tyr-134, Asp-243, and Gln-244 together coordinate glycerol. ADP is bound by residues Thr-265 and Gly-308. Positions 265, 308, 312, and 409 each coordinate ATP. Residues Gly-409 and Asn-413 each contribute to the ADP site.

It belongs to the FGGY kinase family.

The enzyme catalyses glycerol + ATP = sn-glycerol 3-phosphate + ADP + H(+). It functions in the pathway polyol metabolism; glycerol degradation via glycerol kinase pathway; sn-glycerol 3-phosphate from glycerol: step 1/1. Inhibited by fructose 1,6-bisphosphate (FBP). Functionally, key enzyme in the regulation of glycerol uptake and metabolism. Catalyzes the phosphorylation of glycerol to yield sn-glycerol 3-phosphate. This chain is Glycerol kinase, found in Oleidesulfovibrio alaskensis (strain ATCC BAA-1058 / DSM 17464 / G20) (Desulfovibrio alaskensis).